Consider the following 146-residue polypeptide: Lipoprotein signal peptidase (146 aa).

A run of 3 helical transmembrane segments spans residues 10–30, 54–74, and 80–100; these read GLFVLVFAIDQAIKALILGGF, FLEGWLKYIQLGMLGGILLFL, and FFVAHYLPLSILLAAGFSNIL. Catalysis depends on residues Asp110 and Asp127. The chain crosses the membrane as a helical span at residues 118–138; sequence FEFAIFNFADVMIDVAVALFL.

It belongs to the peptidase A8 family.

The protein localises to the cell inner membrane. The enzyme catalyses Release of signal peptides from bacterial membrane prolipoproteins. Hydrolyzes -Xaa-Yaa-Zaa-|-(S,diacylglyceryl)Cys-, in which Xaa is hydrophobic (preferably Leu), and Yaa (Ala or Ser) and Zaa (Gly or Ala) have small, neutral side chains.. The protein operates within protein modification; lipoprotein biosynthesis (signal peptide cleavage). This protein specifically catalyzes the removal of signal peptides from prolipoproteins. The polypeptide is Lipoprotein signal peptidase (Wolinella succinogenes (strain ATCC 29543 / DSM 1740 / CCUG 13145 / JCM 31913 / LMG 7466 / NCTC 11488 / FDC 602W) (Vibrio succinogenes)).